The following is a 457-amino-acid chain: Gustatory and odorant receptor 24 (457 aa).

The Cytoplasmic segment spans residues 1 to 115 (MSLYFNADTM…GGTAFVLASP (115 aa)). The chain crosses the membrane as a helical span at residues 116-136 (SMTYCVLFFLLLTVYIAFILL). Residues 137 to 152 (NRIEIVRTLEGRFEES) are Extracellular-facing. Residues 153–173 (VIAYLFIVNILPILIIPLMWY) form a helical membrane-spanning segment. The Cytoplasmic segment spans residues 174 to 209 (ESRKVVSVVNGWVDFETVYRETTGRALELRLRTKAQ). The helical transmembrane segment at 210–230 (VIAILLPILCSLSVAITHVTM) threads the bilayer. Residues 231–237 (VDFKLLQ) lie on the Extracellular side of the membrane. Residues 238 to 258 (VIPYCVLDTITYMMGGYWYMA) form a helical membrane-spanning segment. Over 259 to 309 (CETLSITAKILAEDFQRALRHVGPAAKVSEYRSLWLRLSKLARDTGFSTCY) the chain is Cytoplasmic. The chain crosses the membrane as a helical span at residues 310 to 330 (TFTFICLYLFFIITLSIYGLM). The Extracellular portion of the chain corresponds to 331–341 (SQISDGFGVKD). Residues 342 to 362 (IGLAVTAFCSVGLLFYICDEA) traverse the membrane as a helical segment. At 363 to 421 (HYASFNVRTNFQKKLLMVELSWMNTDAQTEINMFLRATEMNPSSINLGGFFDVNRTLFK) the chain is on the cytoplasmic side. The helical transmembrane segment at 422–442 (SLLATMVTYLVVLLQFQISIP) threads the bilayer. Residues 443 to 457 (DEPSAMLMHSNSSHS) are Extracellular-facing. Residue Asn-453 is glycosylated (N-linked (GlcNAc...) asparagine).

This sequence belongs to the insect chemoreceptor superfamily. Gustatory receptor (GR) family. Gr21a subfamily. As to expression, carbon dioxide-responsive neurons coexpress GPRgr22 and GPRgr24 in the maxillary palp, at both larval and adult life stages.

It localises to the cell membrane. Gustatory receptor which mediates acceptance or avoidance behavior, depending on its substrates. GPRgr22 and GPRgr24 together are sufficient for olfactory carbon dioxide-chemosensation. The protein is Gustatory and odorant receptor 24 of Anopheles gambiae (African malaria mosquito).